The chain runs to 390 residues: MPPSGLRLLPLLLPLPWLLVLTPGRPAAGLSTCKTIDMELVKRKRIEAIRGQILSKLRLASPPSQGEVPPGPLPEAVLALYNSTRDRVAGESADPEPEPEADYYAKEVTRVLMVDRNNAIYEKTKDISHSIYMFFNTSDIREAVPEPPLLSRAELRLQRLKSSVEQHVELYQKYSNNSWRYLGNRLLTPTDTPEWLSFDVTGVVRQWLNQGDGIQGFRFSAHCSCDSKDNKLHVEINGISPKRRGDLGTIHDMNRPFLLLMATPLERAQHLHSSRHRRALDTNYCFSSTEKNCCVRQLYIDFRKDLGWKWIHEPKGYHANFCLGPCPYIWSLDTQYSKVLALYNQHNPGASASPCCVPQALEPLPIVYYVGRKPKVEQLSNMIVRSCKCS.

Positions 1–29 (MPPSGLRLLPLLLPLPWLLVLTPGRPAAG) are cleaved as a signal peptide. The straightjacket domain stretch occupies residues 30 to 74 (LSTCKTIDMELVKRKRIEAIRGQILSKLRLASPPSQGEVPPGPLP). The arm domain stretch occupies residues 75-271 (EAVLALYNST…ATPLERAQHL (197 aa)). Residues asparagine 82, asparagine 136, and asparagine 176 are each glycosylated (N-linked (GlcNAc...) asparagine). The tract at residues 226–252 (DSKDNKLHVEINGISPKRRGDLGTIHD) is bowtie tail. The short motif at 244-246 (RGD) is the Cell attachment site element. 4 disulfides stabilise this stretch: cysteine 285–cysteine 294, cysteine 293–cysteine 356, cysteine 322–cysteine 387, and cysteine 326–cysteine 389.

The protein belongs to the TGF-beta family. As to quaternary structure, homodimer; disulfide-linked. Interacts with the serine proteases, HTRA1 and HTRA3: the interaction with either inhibits TGFB1-mediated signaling and the HTRA protease activity is required for this inhibition. May interact with THSD4; this interaction may lead to sequestration by FBN1 microfibril assembly and attenuation of TGFB signaling. Interacts with CD109, DPT and ASPN. Interacts with EFEMP2. Interacts with TSKU; the interaction contributes to regulation of the hair cycle. Interacts with TGFBR3. In terms of assembly, homodimer; disulfide-linked. Interacts with transforming growth factor beta-1 (TGF-beta-1) chain; interaction is non-covalent and maintains TGF-beta-1 in a latent state; each latency-associated peptide (LAP) monomer interacts with TGF-beta-1 in the other monomer. Interacts with LTBP1; leading to regulation of TGF-beta-1 activation. Interacts with LRRC32/GARP; leading to regulation of TGF-beta-1 activation on the surface of activated regulatory T-cells (Tregs). Interacts with LRRC33/NRROS; leading to regulation of TGF-beta-1 activation in macrophages and microglia. Interacts (via cell attachment site) with integrins ITGAV and ITGB6 (ITGAV:ITGB6), leading to release of the active TGF-beta-1. Interacts with NREP; the interaction results in a decrease in TGFB1 autoinduction. Interacts with HSP90AB1; inhibits latent TGFB1 activation. Homodimer; disulfide-linked. Interacts with TGF-beta receptors (TGFBR1 and TGFBR2), leading to signal transduction. Post-translationally, transforming growth factor beta-1 proprotein: The precursor proprotein is cleaved in the Golgi apparatus by FURIN to form Transforming growth factor beta-1 (TGF-beta-1) and Latency-associated peptide (LAP) chains, which remain non-covalently linked, rendering TGF-beta-1 inactive. In terms of processing, N-glycosylated. Deglycosylation leads to activation of Transforming growth factor beta-1 (TGF-beta-1); mechanisms triggering deglycosylation-driven activation of TGF-beta-1 are however unclear. In terms of tissue distribution, expressed in cardiomyocytes. Weakly expressed in the mammary glands, with a slight increase of expression following onset of involution.

Its subcellular location is the secreted. The protein resides in the extracellular space. It localises to the extracellular matrix. Transforming growth factor beta-1 proprotein: Precursor of the Latency-associated peptide (LAP) and Transforming growth factor beta-1 (TGF-beta-1) chains, which constitute the regulatory and active subunit of TGF-beta-1, respectively. In terms of biological role, required to maintain the Transforming growth factor beta-1 (TGF-beta-1) chain in a latent state during storage in extracellular matrix. Associates non-covalently with TGF-beta-1 and regulates its activation via interaction with 'milieu molecules', such as LTBP1, LRRC32/GARP and LRRC33/NRROS, that control activation of TGF-beta-1. Interaction with LRRC33/NRROS regulates activation of TGF-beta-1 in macrophages and microglia. Interaction with LRRC32/GARP controls activation of TGF-beta-1 on the surface of activated regulatory T-cells (Tregs). Interaction with integrins (ITGAV:ITGB6 or ITGAV:ITGB8) results in distortion of the Latency-associated peptide chain and subsequent release of the active TGF-beta-1. Functionally, multifunctional protein that regulates the growth and differentiation of various cell types and is involved in various processes, such as normal development, immune function, microglia function and responses to neurodegeneration. Activation into mature form follows different steps: following cleavage of the proprotein in the Golgi apparatus, Latency-associated peptide (LAP) and Transforming growth factor beta-1 (TGF-beta-1) chains remain non-covalently linked rendering TGF-beta-1 inactive during storage in extracellular matrix. At the same time, LAP chain interacts with 'milieu molecules', such as LTBP1, LRRC32/GARP and LRRC33/NRROS that control activation of TGF-beta-1 and maintain it in a latent state during storage in extracellular milieus. TGF-beta-1 is released from LAP by integrins (ITGAV:ITGB6 or ITGAV:ITGB8): integrin-binding to LAP stabilizes an alternative conformation of the LAP bowtie tail and results in distortion of the LAP chain and subsequent release of the active TGF-beta-1. Once activated following release of LAP, TGF-beta-1 acts by binding to TGF-beta receptors (TGFBR1 and TGFBR2), which transduce signal. While expressed by many cells types, TGF-beta-1 only has a very localized range of action within cell environment thanks to fine regulation of its activation by Latency-associated peptide chain (LAP) and 'milieu molecules'. Plays an important role in bone remodeling: acts as a potent stimulator of osteoblastic bone formation, causing chemotaxis, proliferation and differentiation in committed osteoblasts. Can promote either T-helper 17 cells (Th17) or regulatory T-cells (Treg) lineage differentiation in a concentration-dependent manner. At high concentrations, leads to FOXP3-mediated suppression of RORC and down-regulation of IL-17 expression, favoring Treg cell development. At low concentrations in concert with IL-6 and IL-21, leads to expression of the IL-17 and IL-23 receptors, favoring differentiation to Th17 cells. Stimulates sustained production of collagen through the activation of CREB3L1 by regulated intramembrane proteolysis (RIP). Mediates SMAD2/3 activation by inducing its phosphorylation and subsequent translocation to the nucleus. Positively regulates odontoblastic differentiation in dental papilla cells, via promotion of IPO7-mediated translocation of phosphorylated SMAD2 to the nucleus and subsequent transcription of target genes. Can induce epithelial-to-mesenchymal transition (EMT) and cell migration in various cell types. The protein is Transforming growth factor beta-1 proprotein of Mus musculus (Mouse).